Here is a 216-residue protein sequence, read N- to C-terminus: MNFPIFALFSFVSGSIPFGYWIALRFAGVDIRKLGSKNIGATNVGRLIGWKFGFIVLALDITKGMLPVYLSSVYVPEGGIPFQLLCGVCAVLGHMFSPFLGFRGGKGVATTFGVFLVLTPIACLGAVLVFWVVYKFFKFVSLGSIFASITLPLVYAFSTILLLHEEVSYWVLGTMVFISFGIILTHRENIIRILNRSELFAVKGEEQDGDSERNRR.

Transmembrane regions (helical) follow at residues 3-23 (FPIFALFSFVSGSIPFGYWIA), 48-68 (IGWKFGFIVLALDITKGMLPV), 82-102 (FQLLCGVCAVLGHMFSPFLGF), 112-132 (FGVFLVLTPIACLGAVLVFWV), 142-162 (LGSIFASITLPLVYAFSTILL), and 166-186 (EVSYWVLGTMVFISFGIILTH).

Belongs to the PlsY family. As to quaternary structure, probably interacts with PlsX.

The protein localises to the cell inner membrane. The enzyme catalyses an acyl phosphate + sn-glycerol 3-phosphate = a 1-acyl-sn-glycero-3-phosphate + phosphate. It functions in the pathway lipid metabolism; phospholipid metabolism. Catalyzes the transfer of an acyl group from acyl-phosphate (acyl-PO(4)) to glycerol-3-phosphate (G3P) to form lysophosphatidic acid (LPA). This enzyme utilizes acyl-phosphate as fatty acyl donor, but not acyl-CoA or acyl-ACP. The sequence is that of Glycerol-3-phosphate acyltransferase from Leptospira interrogans serogroup Icterohaemorrhagiae serovar Lai (strain 56601).